The sequence spans 300 residues: ClpXP adapter protein SpxH (300 aa).

Belongs to the SpxH family. Interacts with Spx.

Its subcellular location is the cytoplasm. Adapter protein required for efficient degradation of Spx by ClpXP under non-stress conditions. Interaction with Spx stabilizes Spx and exposes the C-terminus of Spx for recognition and proteolysis by ClpXP. This is ClpXP adapter protein SpxH from Shouchella clausii (strain KSM-K16) (Alkalihalobacillus clausii).